Here is a 644-residue protein sequence, read N- to C-terminus: MEEVDNIIIHTLRQIGCEIPEEIQSLREFTTTVIVQASSKCLHVINEDIDIPSNLPSSMSAKFRVGTMLAAALQDLGYRGEIGYQTFLYSNEKDIRSVFMFLVEHLPKETSLAASEPLGSSVLLNRRVASDLAQRLTLSWTPTFLKKGGVRWKGSKPKTYFREGSASMRRFHACNLKSPQGLTDLTAKISKETKAYYSVIPYVTSQPPCRQDVVPSVLESNSLSVTAVAEWELEWNQSGLSSRLTKEEYLARKRQRLEKKIKDHVLAEMQRVEAGGRAASDLSDIVSSFSDRVSTIESQTQGSRFTRTEKLQFAQDEQKAAAMAGLSESGPPKMDTEEELQKKREQELEALQNKLKDLASSVDEKKSEIKTMNAGLQQTNEQVTATKVQNSEHEESYKVKKRTVDLLPDAENNIAKLQGVVDSSSQRLVNLAQQWETHRTALIDEYRELKVINANKVSETQKKLEEIKSLREKMKEVAEETRGKDDLYKQLVSEYERMSRDVNRSAYTRRILEIVGNIKKQKEEINKILVDTKSVQKEINQLSGKLDRTFTVTDELIFRDAKKDEACRKAYKYLASLHENCKELIQAVEDTGVIMREIRDLEEQIDTESQRNTANNLERITADHKQMKEENATLTKKIKALKSS.

The tract at residues 316-341 (DEQKAAAMAGLSESGPPKMDTEEELQ) is disordered. Coiled coils occupy residues 333-383 (KMDT…NEQV), 409-486 (DAEN…GKDD), and 592-644 (GVIM…LKSS).

This sequence belongs to the CCDC22 family.

The protein is Coiled-coil domain-containing protein 22 homolog of Nematostella vectensis (Starlet sea anemone).